Reading from the N-terminus, the 133-residue chain is Large ribosomal subunit protein bL12 (133 aa).

This sequence belongs to the bacterial ribosomal protein bL12 family. Homodimer. Part of the ribosomal stalk of the 50S ribosomal subunit. Forms a multimeric L10(L12)X complex, where L10 forms an elongated spine to which 2 to 4 L12 dimers bind in a sequential fashion. Binds GTP-bound translation factors.

Forms part of the ribosomal stalk which helps the ribosome interact with GTP-bound translation factors. Is thus essential for accurate translation. This Trichodesmium erythraeum (strain IMS101) protein is Large ribosomal subunit protein bL12.